The chain runs to 293 residues: Ribosomal RNA small subunit methyltransferase A (293 aa).

S-adenosyl-L-methionine contacts are provided by asparagine 38, valine 40, glycine 65, glutamate 86, aspartate 116, and asparagine 133.

This sequence belongs to the class I-like SAM-binding methyltransferase superfamily. rRNA adenine N(6)-methyltransferase family. RsmA subfamily.

The protein resides in the cytoplasm. It carries out the reaction adenosine(1518)/adenosine(1519) in 16S rRNA + 4 S-adenosyl-L-methionine = N(6)-dimethyladenosine(1518)/N(6)-dimethyladenosine(1519) in 16S rRNA + 4 S-adenosyl-L-homocysteine + 4 H(+). Specifically dimethylates two adjacent adenosines (A1518 and A1519) in the loop of a conserved hairpin near the 3'-end of 16S rRNA in the 30S particle. May play a critical role in biogenesis of 30S subunits. The chain is Ribosomal RNA small subunit methyltransferase A from Paenarthrobacter aurescens (strain TC1).